The sequence spans 777 residues: Aminopeptidase P (777 aa).

A signal peptide spans 1 to 17; that stretch reads MQLNFLLFVFIFLMVFH. His-551 provides a ligand contact to substrate. 2 residues coordinate Mn(2+): Asp-570 and Asp-581. His-640 contributes to the substrate binding site. His-644 provides a ligand contact to Mn(2+). His-653 is a substrate binding site. Mn(2+) is bound by residues Glu-676 and Glu-690.

The protein belongs to the peptidase M24B family. As to quaternary structure, homodimer. Requires Mn(2+) as cofactor. The N-terminus may be proteolytically cleaved to generate a 73-kDa mature form.

Its subcellular location is the vacuole lumen. It is found in the cytoplasm. The catalysed reaction is Release of any N-terminal amino acid, including proline, that is linked to proline, even from a dipeptide or tripeptide.. Its activity is regulated as follows. Partially activated by Co(2+) and Mg(2+) has no effect. Inhibited by 1 mM Zn(2+), Ni(2+), or Cu(2+). Inhibited by apstatin, a non-hydrolysable peptide analog. Its function is as follows. Catalyzes the removal of a penultimate prolyl residue from the N-termini of peptides. In the food vacuole, involved in the final step of host hemoglobin catabolism, by cleaving hemoglobin-derived oligopeptides. In the cytoplasm, may be involved in the last steps of the turnover of ubiquitinated proteins. The protein is Aminopeptidase P of Plasmodium falciparum (isolate 3D7).